The chain runs to 478 residues: CDK5 and ABL1 enzyme substrate 2 (478 aa).

The tract at residues 1–121 (MAAAAAGGAP…GLGLDGQRQR (121 aa)) is disordered. Positions 11–24 (GPAPGPAGPPPPAA) are enriched in pro residues. The span at 25 to 35 (PTSAARAPPQA) shows a compositional bias: low complexity. Residues 36 to 46 (LRRRGDSRRRQ) are compositionally biased toward basic residues. Over residues 69-92 (EKPPPPPAEAREPPAPPPPEPPTG) the composition is skewed to pro residues. A phosphoserine mark is found at serine 130 and serine 208. Residues 257–296 (SDSHGLLPTPRPSVPRTLPGSRHKPAPTKSAPASTELGSD) form a disordered region.

The protein belongs to the cyclin family. Binds to CDK3, CDK5 and ABL1. The C-terminal cyclin-box-like region binds to CDK5.

Its function is as follows. Unknown. Probably involved in G1-S cell cycle transition. This chain is CDK5 and ABL1 enzyme substrate 2 (CABLES2), found in Homo sapiens (Human).